Reading from the N-terminus, the 197-residue chain is MTKGKKKQTVELDLNKVEKLEHLMPVPKSRQSSITSVESEDGSLKEVLKPPPRKDFEDLASFESYIRDETWDNEFDYCHAHLTYYPPFVLKEVHDDIEKIKPTMNKNSSKFRRNLQHHIQRHLILEMEKCCGFEMDFGKAKMEETPKNIIWRYEDSGDHGFPKEEEDKFNRHWKLELEVSCNNENPLVQVDYKAIPV.

A disordered region spans residues 22-50 (HLMPVPKSRQSSITSVESEDGSLKEVLKP).

This sequence belongs to the RGI1 family.

The protein localises to the cell membrane. In terms of biological role, involved in the control of energetic metabolism and significantly contribute to cell fitness, especially under respiratory growth conditions. The chain is Respiratory growth induced protein 1 (RGI1) from Clavispora lusitaniae (strain ATCC 42720) (Yeast).